Here is a 224-residue protein sequence, read N- to C-terminus: 2,5-diamino-6-ribosylamino-4(3H)-pyrimidinone 5'-phosphate reductase (224 aa).

NADP(+) contacts are provided by residues glycine 16, threonine 57, aspartate 61, 83–86 (SKLR), valine 134, and 156–159 (GGTL).

This sequence belongs to the HTP reductase family. As to quaternary structure, homodimer.

It catalyses the reaction 2,5-diamino-6-(1-D-ribitylamino)pyrimidin-4(3H)-one 5'-phosphate + NADP(+) = 2,5-diamino-6-(1-D-ribosylamino)pyrimidin-4(3H)-one 5'-phosphate + NADPH + H(+). It carries out the reaction 2,5-diamino-6-(1-D-ribitylamino)pyrimidin-4(3H)-one 5'-phosphate + NAD(+) = 2,5-diamino-6-(1-D-ribosylamino)pyrimidin-4(3H)-one 5'-phosphate + NADH + H(+). The protein operates within cofactor biosynthesis; riboflavin biosynthesis. Catalyzes an early step in riboflavin biosynthesis, the NAD(P)H-dependent reduction of the ribose side chain of 2,5-diamino-6-ribosylamino-4(3H)-pyrimidinone 5'-phosphate, yielding 2,5-diamino-6-ribitylamino-4(3H)-pyrimidinone 5'-phosphate. The beta anomer is the authentic substrate, and the alpha anomer can serve as substrate subsequent to spontaneous anomerization. NADPH and NADH function equally well as the reductants. Does not catalyze the reduction of 5-amino-6-(5-phospho-D-ribosylamino)uracil to 5-amino-6-(5-phospho-D-ribitylamino)uracil. The polypeptide is 2,5-diamino-6-ribosylamino-4(3H)-pyrimidinone 5'-phosphate reductase (arfC) (Methanocaldococcus jannaschii (strain ATCC 43067 / DSM 2661 / JAL-1 / JCM 10045 / NBRC 100440) (Methanococcus jannaschii)).